A 324-amino-acid polypeptide reads, in one-letter code: CYFIP-related Rac1 interactor B (324 aa).

Gly2 is lipidated: N-myristoyl glycine. A Glycyl lysine isopeptide (Lys-Gly) (interchain with G-Cter in ubiquitin) cross-link involves residue Lys74.

It belongs to the CYRI family. As to quaternary structure, interacts with RAC1 (GTP-bound form preferentially). Ubiquitinated at Lys-74 upon Salmonella bacterial infection. In terms of tissue distribution, expressed in pancreatic ducts (at protein level).

It localises to the membrane. The protein localises to the mitochondrion. Functionally, negatively regulates RAC1 signaling and RAC1-driven cytoskeletal remodeling. Regulates chemotaxis, cell migration and epithelial polarization by controlling the polarity, plasticity, duration and extent of protrusions. Limits Rac1 mediated activation of the Scar/WAVE complex, focuses protrusion signals and regulates pseudopod complexity by inhibiting Scar/WAVE-induced actin polymerization. Protects against Salmonella bacterial infection. Attenuates processes such as macropinocytosis, phagocytosis and cell migration and restrict sopE-mediated bacterial entry. Also restricts infection mediated by Mycobacterium tuberculosis and Listeria monocytogenes. Involved in the regulation of mitochondrial dynamics and oxidative stress. The chain is CYFIP-related Rac1 interactor B (Cyrib) from Mus musculus (Mouse).